The following is a 346-amino-acid chain: Very-long-chain 3-oxoacyl-CoA reductase (346 aa).

Residues 19-39 (VLLGALLVGVFKLTVFILSVT) traverse the membrane as a helical segment. Val65, Asp119, Asn146, Tyr220, Lys224, Val253, and Ser255 together coordinate NADP(+). Tyr220 acts as the Proton donor in catalysis. The active-site Lowers pKa of active site Tyr is the Lys224.

Belongs to the short-chain dehydrogenases/reductases (SDR) family.

The protein resides in the endoplasmic reticulum membrane. It catalyses the reaction a very-long-chain (3R)-3-hydroxyacyl-CoA + NADP(+) = a very-long-chain 3-oxoacyl-CoA + NADPH + H(+). The protein operates within lipid metabolism; fatty acid biosynthesis. Its function is as follows. Component of the microsomal membrane bound fatty acid elongation system, which produces the 26-carbon very long-chain fatty acids (VLCFA) from palmitate. Catalyzes the reduction of the 3-ketoacyl-CoA intermediate that is formed in each cycle of fatty acid elongation. VLCFAs serve as precursors for ceramide and sphingolipids. This Scheffersomyces stipitis (strain ATCC 58785 / CBS 6054 / NBRC 10063 / NRRL Y-11545) (Yeast) protein is Very-long-chain 3-oxoacyl-CoA reductase.